The following is a 150-amino-acid chain: Transcriptional repressor NrdR (150 aa).

The disordered stretch occupies residues 1–22 (MKCPYCSAPDSRVVNSRPSDDG). A zinc finger spans residues 3-34 (CPYCSAPDSRVVNSRPSDDGASIRRRRECLRC). The 88-residue stretch at 49–136 (LMVLKRGGQR…VYRDFDSLER (88 aa)) folds into the ATP-cone domain.

Belongs to the NrdR family. The cofactor is Zn(2+).

Functionally, negatively regulates transcription of bacterial ribonucleotide reductase nrd genes and operons by binding to NrdR-boxes. This Deinococcus geothermalis (strain DSM 11300 / CIP 105573 / AG-3a) protein is Transcriptional repressor NrdR.